Here is a 120-residue protein sequence, read N- to C-terminus: UPF0102 protein CBU_1742 (120 aa).

It belongs to the UPF0102 family.

This Coxiella burnetii (strain RSA 493 / Nine Mile phase I) protein is UPF0102 protein CBU_1742.